The primary structure comprises 349 residues: uncharacterized protein (349 aa).

The segment covering 116–135 (HFSQTNPKSTPEPPCTSSSG) has biased composition (polar residues). The interval 116–148 (HFSQTNPKSTPEPPCTSSSGAGDCHENLPADGY) is disordered.

This is an uncharacterized protein from Caenorhabditis elegans.